The following is a 90-amino-acid chain: Large ribosomal subunit protein eL31 (90 aa).

The protein belongs to the eukaryotic ribosomal protein eL31 family.

This is Large ribosomal subunit protein eL31 from Natronomonas pharaonis (strain ATCC 35678 / DSM 2160 / CIP 103997 / JCM 8858 / NBRC 14720 / NCIMB 2260 / Gabara) (Halobacterium pharaonis).